Consider the following 873-residue polypeptide: DNA mismatch repair protein MutS (873 aa).

The segment at M1–T34 is disordered. Over residues R8–H26 the composition is skewed to basic residues. G635–S642 is a binding site for ATP.

The protein belongs to the DNA mismatch repair MutS family.

This protein is involved in the repair of mismatches in DNA. It is possible that it carries out the mismatch recognition step. This protein has a weak ATPase activity. This is DNA mismatch repair protein MutS from Chromobacterium violaceum (strain ATCC 12472 / DSM 30191 / JCM 1249 / CCUG 213 / NBRC 12614 / NCIMB 9131 / NCTC 9757 / MK).